The chain runs to 947 residues: Bifunctional glutamine synthetase adenylyltransferase/adenylyl-removing enzyme (947 aa).

The segment at 1 to 440 (MTPLSSPLSQ…VFNELIGDDE (440 aa)) is adenylyl removase. The segment at 450–947 (SEPWREVWQD…ASWRKWLVAV (498 aa)) is adenylyl transferase.

It belongs to the GlnE family. The cofactor is Mg(2+).

The catalysed reaction is [glutamine synthetase]-O(4)-(5'-adenylyl)-L-tyrosine + phosphate = [glutamine synthetase]-L-tyrosine + ADP. It carries out the reaction [glutamine synthetase]-L-tyrosine + ATP = [glutamine synthetase]-O(4)-(5'-adenylyl)-L-tyrosine + diphosphate. Involved in the regulation of glutamine synthetase GlnA, a key enzyme in the process to assimilate ammonia. When cellular nitrogen levels are high, the C-terminal adenylyl transferase (AT) inactivates GlnA by covalent transfer of an adenylyl group from ATP to specific tyrosine residue of GlnA, thus reducing its activity. Conversely, when nitrogen levels are low, the N-terminal adenylyl removase (AR) activates GlnA by removing the adenylyl group by phosphorolysis, increasing its activity. The regulatory region of GlnE binds the signal transduction protein PII (GlnB) which indicates the nitrogen status of the cell. This is Bifunctional glutamine synthetase adenylyltransferase/adenylyl-removing enzyme from Salmonella enteritidis PT4 (strain P125109).